The following is a 928-amino-acid chain: Isoleucine--tRNA ligase (928 aa).

Residues 57-67 (PFANGNIHMGH) carry the 'HIGH' region motif. Glu554 is a binding site for L-isoleucyl-5'-AMP. The short motif at 595 to 599 (KMSKS) is the 'KMSKS' region element. ATP is bound at residue Lys598. Zn(2+) contacts are provided by Cys887, Cys890, Cys907, and Cys910.

Belongs to the class-I aminoacyl-tRNA synthetase family. IleS type 1 subfamily. Monomer. Requires Zn(2+) as cofactor.

Its subcellular location is the cytoplasm. It carries out the reaction tRNA(Ile) + L-isoleucine + ATP = L-isoleucyl-tRNA(Ile) + AMP + diphosphate. Its function is as follows. Catalyzes the attachment of isoleucine to tRNA(Ile). As IleRS can inadvertently accommodate and process structurally similar amino acids such as valine, to avoid such errors it has two additional distinct tRNA(Ile)-dependent editing activities. One activity is designated as 'pretransfer' editing and involves the hydrolysis of activated Val-AMP. The other activity is designated 'posttransfer' editing and involves deacylation of mischarged Val-tRNA(Ile). The protein is Isoleucine--tRNA ligase of Lactobacillus johnsonii (strain CNCM I-12250 / La1 / NCC 533).